The following is a 96-amino-acid chain: Co-chaperonin GroES (96 aa).

Belongs to the GroES chaperonin family. As to quaternary structure, heptamer of 7 subunits arranged in a ring. Interacts with the chaperonin GroEL.

Its subcellular location is the cytoplasm. Functionally, together with the chaperonin GroEL, plays an essential role in assisting protein folding. The GroEL-GroES system forms a nano-cage that allows encapsulation of the non-native substrate proteins and provides a physical environment optimized to promote and accelerate protein folding. GroES binds to the apical surface of the GroEL ring, thereby capping the opening of the GroEL channel. The chain is Co-chaperonin GroES from Thioalkalivibrio sulfidiphilus (strain HL-EbGR7).